Reading from the N-terminus, the 499-residue chain is Inosine-5'-monophosphate dehydrogenase (499 aa).

2 CBS domains span residues Ile-106 to Val-165 and Met-169 to Ala-225. NAD(+) is bound by residues Asp-260 and Gly-308–Gly-310. Gly-310 and Gly-312 together coordinate K(+). Residue Ser-313 coordinates IMP. Cys-315 lines the K(+) pocket. Cys-315 acts as the Thioimidate intermediate in catalysis. IMP is bound by residues Asp-348–Gly-350, Gly-371–Ser-372, and Tyr-395–Gly-399. Arg-411 (proton acceptor) is an active-site residue. Glu-425 contacts IMP. Residues Glu-479, Gly-480, and His-481 each coordinate K(+). The tract at residues Gly-480–Glu-499 is disordered.

The protein belongs to the IMPDH/GMPR family. As to quaternary structure, homotetramer. Requires K(+) as cofactor.

The enzyme catalyses IMP + NAD(+) + H2O = XMP + NADH + H(+). Its pathway is purine metabolism; XMP biosynthesis via de novo pathway; XMP from IMP: step 1/1. Mycophenolic acid (MPA) is a non-competitive inhibitor that prevents formation of the closed enzyme conformation by binding to the same site as the amobile flap. In contrast, mizoribine monophosphate (MZP) is a competitive inhibitor that induces the closed conformation. MPA is a potent inhibitor of mammalian IMPDHs but a poor inhibitor of the bacterial enzymes. MZP is a more potent inhibitor of bacterial IMPDH. In terms of biological role, catalyzes the conversion of inosine 5'-phosphate (IMP) to xanthosine 5'-phosphate (XMP), the first committed and rate-limiting step in the de novo synthesis of guanine nucleotides, and therefore plays an important role in the regulation of cell growth. This chain is Inosine-5'-monophosphate dehydrogenase, found in Halobacterium salinarum (strain ATCC 700922 / JCM 11081 / NRC-1) (Halobacterium halobium).